A 150-amino-acid polypeptide reads, in one-letter code: Large ribosomal subunit protein uL23 (150 aa).

Positions 1–24 (MNKENKTQAVNKAKNTAKVAKKGS) are disordered. Positions 7–18 (TQAVNKAKNTAK) are enriched in low complexity.

It belongs to the universal ribosomal protein uL23 family.

The chain is Large ribosomal subunit protein uL23 (RPL23A) from Tetrahymena thermophila (strain SB210).